The following is a 1143-amino-acid chain: AP-3 complex subunit delta (1143 aa).

HEAT repeat units lie at residues 129 to 166, 167 to 203, 205 to 242, 245 to 279, 280 to 317, 318 to 354, 356 to 389, and 416 to 455; these read DLAR…RYPE, SLRP…RNPK, YLPL…HEPR, KKLI…SDHI, PLMK…IHPK, AVSE…KKNI, DIVF…MGTY, and LIAS…PTEG. Disordered regions lie at residues 520–541, 634–692, 704–728, 741–792, and 829–899; these read KIPS…DQNE, QEPI…RHPI, KQAN…PENI, HVGA…NDAL, and KKNA…QAAA. The segment covering 524–540 has biased composition (acidic residues); it reads LDDDDEEEEAQEEEDQN. Residues 526-550 adopt a coiled-coil conformation; it reads DDDEEEEAQEEEDQNEITHEIVQEC. Positions 653–662 are enriched in basic residues; that stretch reads HQKKHHKHHR. The span at 666–675 shows a compositional bias: acidic residues; the sequence is DGDDDEDDET. Residues 814–835 adopt a coiled-coil conformation; it reads TDIIKEKEREMAMLAKKNAKLS. Over residues 840 to 849 the composition is skewed to polar residues; the sequence is PSTANYSEVT. Low complexity-rich tracts occupy residues 854–867 and 881–899; these read APAK…AAGS and KPAA…QAAA. The GAE domain occupies 914 to 1016; the sequence is KTILDDDNFK…FTLLASPSSS (103 aa).

This sequence belongs to the adaptor complexes large subunit family. Adaptor protein complex 3 (AP-3) is a heterotetramer composed of two large adaptins (delta-type subunit and beta-type subunit), a medium adaptin (mu-type subunit) and a small adaptin (sigma-type subunit).

It localises to the endosome membrane. Part of the AP-3 complex, an adaptor-related complex which is essential for the compartmentalization of the endocytic pathway. In Dictyostelium discoideum (Social amoeba), this protein is AP-3 complex subunit delta (ap3d1).